The following is a 499-amino-acid chain: Protein-cysteine N-palmitoyltransferase HHAT (499 aa).

The Cytoplasmic portion of the chain corresponds to 1-5 (MLPGW). Residues 6-22 (ELTLCLLVSLGFHFRSF) form a helical membrane-spanning segment. Over 23-67 (YEVYKVSREHEEELDQEFELEMDTLFGGLKKDPTDFEWNFWMEWG) the chain is Lumenal. The helical transmembrane segment at 68 to 84 (KRRLVWLFIGHMAVSQL) threads the bilayer. The Cytoplasmic portion of the chain corresponds to 85–94 (ATLLTKKHRP). The essential for palmitoylation of SHH stretch occupies residues 91–155 (KHRPWIVMVY…TLRLQSVEEV (65 aa)). An intramembrane segment occupies 95 to 119 (WIVMVYGMWACWCVLGAPGVVMVLL). Residues 120–131 (HSTIAFCVAQFR) lie on the Cytoplasmic side of the membrane. A helical transmembrane segment spans residues 132–148 (SVLLSWLCSLLLLSTLR). The Lumenal segment spans residues 149-162 (LQSVEEVKRRWYKT). A helical membrane pass occupies residues 163-183 (ENEYYLLQFTLTVRCLYYTSF). The Cytoplasmic portion of the chain corresponds to 184–208 (SLELCRQPPSAQPTPSAQGASHSYP). Cys-188 carries S-palmitoyl cysteine lipidation. The stretch at 209 to 223 (WLLTYVFYYPVFHNG) is an intramembrane region. The Cytoplasmic portion of the chain corresponds to 224–249 (PILNFPEFFRQMQQPELNSLQHSLCI). Cys-248 carries the S-palmitoyl cysteine lipid modification. Residues 250–277 (VAKGLGRLLCWWWLAELMVHLMYMHALY) traverse the membrane as a helical segment. The Lumenal segment spans residues 278 to 287 (SSAPLLESVS). The chain crosses the membrane as a helical span at residues 288-316 (CWTLGGLALAQVLFFYVKYLVLFGVPALL). Over 317-369 (MRLDGLTPPPLPRCVSTMFSFTGMWRYFDVGLHNFLIRYVYIPLGGSQHGLLG) the chain is Cytoplasmic. The S-palmitoyl cysteine moiety is linked to residue Cys-330. The chain crosses the membrane as a helical span at residues 370 to 386 (TLLSTATTFAFVSYWHG). The active site involves His-385. The Lumenal segment spans residues 387–389 (SYE). A helical transmembrane segment spans residues 390 to 405 (DLWCWAALNWLGVTVE). Over 406–433 (SGVRRLLETPCVRETLARHLSPQAHHRL) the chain is Cytoplasmic. Cys-416 carries S-palmitoyl cysteine lipidation. A helical transmembrane segment spans residues 434-454 (HALLAACSTSMLILFNLVFLG). 454–461 (GGIQVGKT) contacts GTP. The Lumenal portion of the chain corresponds to 455–468 (GIQVGKTYWNRIFL). The chain crosses the membrane as a helical span at residues 469-487 (QGWPWVTLSVLGFLYCYSH). The Cytoplasmic portion of the chain corresponds to 488–499 (VDIAWAQTYTVL).

It belongs to the membrane-bound acyltransferase family. HHAT subfamily.

The protein resides in the endoplasmic reticulum membrane. It is found in the golgi apparatus membrane. It catalyses the reaction N-terminal L-cysteinyl-[protein] + hexadecanoyl-CoA = N-terminal N-hexadecanoyl-L-cysteinyl-[protein] + CoA + H(+). It carries out the reaction N-terminal L-cysteinyl-[protein]-C-terminal glycyl cholesterol ester + hexadecanoyl-CoA = N-terminal N-hexadecanoyl-L-cysteinyl-[protein]-C-terminal glycyl cholesterol ester + CoA + H(+). Its function is as follows. Palmitoyl acyltransferase that catalyzes N-terminal palmitoylation of SHH; which is required for SHH signaling during limb development. It also catalyzes N-terminal palmitoylation of DHH. Promotes the transfer of palmitoyl-CoA from the cytoplasmic to the luminal side of the endoplasmic reticulum membrane, where SHH palmitoylation occurs. Plays a role in proper testis cord formation and the differentiation of Leydig cells. In Mus musculus (Mouse), this protein is Protein-cysteine N-palmitoyltransferase HHAT (Hhat).